The chain runs to 199 residues: Translation initiation factor IF-3 (199 aa).

The protein belongs to the IF-3 family. In terms of assembly, monomer.

It localises to the cytoplasm. In terms of biological role, IF-3 binds to the 30S ribosomal subunit and shifts the equilibrium between 70S ribosomes and their 50S and 30S subunits in favor of the free subunits, thus enhancing the availability of 30S subunits on which protein synthesis initiation begins. The protein is Translation initiation factor IF-3 of Mycoplasmopsis pulmonis (strain UAB CTIP) (Mycoplasma pulmonis).